A 559-amino-acid polypeptide reads, in one-letter code: Protein NRT1/ PTR FAMILY 2.8 (559 aa).

Transmembrane regions (helical) follow at residues 57–77 (GVFLVNVINIWFGSCNILTLA), 92–112 (LLLGSIASFIGMGIFALTAAL), 132–152 (KWQLGVLFSGLGLLAIGAGGV), 178–198 (FFNWWYFSFTVALVIALTGVV), 206–226 (WVIGFVIPTACLALSITTFVI), 321–341 (LKCVTAILPVWVTGIACFILT), 374–394 (VSMITLAIWISLYECVIIPIV), 404–424 (LTLKHRIEIVMGIICMIVAGF), 437–457 (GSFVSPVSIVMLLPQFALAGL), 481–501 (VAGAIFFLSSSIASYICTLLI), and 529–549 (YFFIIAGIQVANLLYFRLFAS).

It belongs to the major facilitator superfamily. Proton-dependent oligopeptide transporter (POT/PTR) (TC 2.A.17) family. Expressed in flowers.

The protein resides in the membrane. This chain is Protein NRT1/ PTR FAMILY 2.8 (NPF2.8), found in Arabidopsis thaliana (Mouse-ear cress).